The primary structure comprises 164 residues: Elicitin-like protein 2 (164 aa).

An N-terminal signal peptide occupies residues 1–22 (MFSKTLVVLAAVAAVTVNGLTA). Cystine bridges form between Cys-25-Cys-91, Cys-47-Cys-76, and Cys-71-Cys-118. Residues 121-164 (ISGGGSTPTTAPPSGTTPTTPTTAPPTGTTPGVTPSPTTPKPAC) form a disordered region. Residues 127–156 (TPTTAPPSGTTPTTPTTAPPTGTTPGVTPS) show a composition bias toward low complexity.

It belongs to the elicitin family.

The protein localises to the secreted. In terms of biological role, induces local and distal defense responses (incompatible hypersensitive reaction) in plants from the solanaceae and cruciferae families. Elicits leaf necrosis and causes the accumulation of pathogenesis-related proteins. Might interact with the lipidic molecules of the plasma membrane. The protein is Elicitin-like protein 2 (POD-2) of Pythium oligandrum (Mycoparasitic fungus).